Here is a 325-residue protein sequence, read N- to C-terminus: Elongation factor P--(R)-beta-lysine ligase (325 aa).

Substrate is bound at residue 76–78 (SPE). Residues 100–102 (RNE) and Asn109 contribute to the ATP site. Position 118 (Tyr118) interacts with substrate. ATP is bound at residue 244-245 (EL). Residue Glu251 coordinates substrate. Gly300 is a binding site for ATP.

It belongs to the class-II aminoacyl-tRNA synthetase family. EpmA subfamily. Homodimer.

The catalysed reaction is D-beta-lysine + L-lysyl-[protein] + ATP = N(6)-((3R)-3,6-diaminohexanoyl)-L-lysyl-[protein] + AMP + diphosphate + H(+). In terms of biological role, with EpmB is involved in the beta-lysylation step of the post-translational modification of translation elongation factor P (EF-P). Catalyzes the ATP-dependent activation of (R)-beta-lysine produced by EpmB, forming a lysyl-adenylate, from which the beta-lysyl moiety is then transferred to the epsilon-amino group of a conserved specific lysine residue in EF-P. In Hamiltonella defensa subsp. Acyrthosiphon pisum (strain 5AT), this protein is Elongation factor P--(R)-beta-lysine ligase.